A 1230-amino-acid polypeptide reads, in one-letter code: MKKGNLEANTKTVPFYKLFFFSDSTDVLLMIVGSIGAIANGVCSPLMTLLFGELIDAMGPNQNNEEIVERVSKVCLSLVYLGLGALGAAFLQVACWMITGERQAARIRSLYLKTILRQDIGFFDVEMTTGEVVGRMSGDTVLILDAMGEKVGKFIQLISTFVGGFVIAFLRGWLLTLVMLTSIPLLAMSGAAIAIIVTRASSQEQAAYAKASNVVEQTLGSIRTVASFTGEKQAMSSYKELINLAYKSNVKQGFVTGLGLGVMFLVFFSTYALGTWFGGEMILRKGYTGGAVINVMVTVVSSSIALGQASPCLTAFTAGKAAAYKMFETIEREPLIDTFDLNGKVLEDIRGEIELRDVCFSYPARPKEEVFGGFSLLIPSGTTTALVGESGSGKSTVISLIERFYDPNSGQVLIDGVDLKEFQLKWIRGKIGLVSQEPVLFSSSIMENIGYGKEGATVEEIQAASKLANAAKFIDKLPLGLETLVGEHGTQLSGGQKQRIAIARAILKDPRILLLDEATSALDAESERVVQEALDRIMVNRTTVIVAHRLSTVRNADIIAVIHRGKIVEEGSHSELLKDHEGAYSQLLRLQEINKESKRLEISDGSISSGSSRGNNSTRQDDDSFSVLGLLAGQDSTKMSQELSQKVSFTRIAALNKPEIPILILGTLVGAVNGTIFPIFGILFAKVIEAFFKAPHELKRDSRFWSMIFVLLGVAAVIVYPTTNYLFAIAGGRLIRRIRSMCFEKVVHMEVGWFDEPGNSSGAMGARLSADAALIRTLVGDSLCLSVKNVASLVTGLIIAFTASWEVAIIILVIIPFIGINGYIQIKFMKGFSADAKAKYEEASQVANDAVGSIRTVASFCAEEKVMEMYKKRCEDTIKSGIKQGLISGVGFGISFFVLYSVYASCFYVGARLVKAGRTNFNDVFQVFLALTLTAVGISQASSFAPDSSKGKGAAVSIFRIIDRISKIDSRDESGMVLENVKGDIELCHISFTYQTRPDVQVFRDLCLSIRAGQTVALVGESGSGKSTVISLLQRFYDPDSGHITLDGVELKKLRLKWLRQQMGLVGQEPVLFNDTIRANIAYGKGGEEATEAEIIAASELANAHRFISSIQKGYDTVVGERGIQLSGGQKQRVAIARAIVKEPKILLLDEATSALDAESERVVQDALDRVMVNRTTIVVAHRLSTIKNADVIAVVKNGVIAEKGTHETLINIEGGVYASLVQLHINASN.

Helical transmembrane passes span Val27–Met47, Leu78–Ile98, Phe154–Leu174, Leu177–Val197, Gly253–Leu273, and Gly286–Leu306. The ABC transmembrane type-1 1 domain occupies Met30–Ala318. In terms of domain architecture, ABC transporter 1 spans Ile353–Arg589. An ATP-binding site is contributed by Gly388–Ser395. 3 N-linked (GlcNAc...) asparagine glycosylation sites follow: Asn540, Asn615, and Asn616. Positions Ile602 to Asp621 are disordered. Positions Ser603–Ser617 are enriched in low complexity. Helical transmembrane passes span Ile662–Ile682 and Met707–Phe727. The ABC transmembrane type-1 2 domain maps to Leu663–Lys950. A glycan (N-linked (GlcNAc...) asparagine) is linked at Asn759. 3 consecutive transmembrane segments (helical) span residues Ile798 to Ile818, Gly889 to Val909, and Val924 to Phe944. One can recognise an ABC transporter 2 domain in the interval Ile985 to Gln1223. Position 1020-1027 (Gly1020–Ser1027) interacts with ATP. N-linked (GlcNAc...) asparagine glycans are attached at residues Asn1074, Asn1174, and Asn1227.

It belongs to the ABC transporter superfamily. ABCB family. Multidrug resistance exporter (TC 3.A.1.201) subfamily.

It localises to the membrane. The chain is ABC transporter B family member 5 (ABCB5) from Arabidopsis thaliana (Mouse-ear cress).